The chain runs to 167 residues: NADH-quinone oxidoreductase subunit I 1 (167 aa).

2 4Fe-4S ferredoxin-type domains span residues 58–88 and 98–127; these read LRRY…IDAE and TRYD…EGPN. The [4Fe-4S] cluster site is built by Cys-68, Cys-71, Cys-74, Cys-78, Cys-107, Cys-110, Cys-113, and Cys-117.

This sequence belongs to the complex I 23 kDa subunit family. As to quaternary structure, NDH-1 is composed of 14 different subunits. Subunits NuoA, H, J, K, L, M, N constitute the membrane sector of the complex. [4Fe-4S] cluster serves as cofactor.

The protein localises to the cell inner membrane. It catalyses the reaction a quinone + NADH + 5 H(+)(in) = a quinol + NAD(+) + 4 H(+)(out). Functionally, NDH-1 shuttles electrons from NADH, via FMN and iron-sulfur (Fe-S) centers, to quinones in the respiratory chain. The immediate electron acceptor for the enzyme in this species is believed to be ubiquinone. Couples the redox reaction to proton translocation (for every two electrons transferred, four hydrogen ions are translocated across the cytoplasmic membrane), and thus conserves the redox energy in a proton gradient. The chain is NADH-quinone oxidoreductase subunit I 1 from Cereibacter sphaeroides (strain ATCC 17029 / ATH 2.4.9) (Rhodobacter sphaeroides).